The sequence spans 158 residues: NAD(P)H-quinone oxidoreductase subunit J, chloroplastic (158 aa).

This sequence belongs to the complex I 30 kDa subunit family. As to quaternary structure, NDH is composed of at least 16 different subunits, 5 of which are encoded in the nucleus.

Its subcellular location is the plastid. It localises to the chloroplast thylakoid membrane. It catalyses the reaction a plastoquinone + NADH + (n+1) H(+)(in) = a plastoquinol + NAD(+) + n H(+)(out). The enzyme catalyses a plastoquinone + NADPH + (n+1) H(+)(in) = a plastoquinol + NADP(+) + n H(+)(out). Its function is as follows. NDH shuttles electrons from NAD(P)H:plastoquinone, via FMN and iron-sulfur (Fe-S) centers, to quinones in the photosynthetic chain and possibly in a chloroplast respiratory chain. The immediate electron acceptor for the enzyme in this species is believed to be plastoquinone. Couples the redox reaction to proton translocation, and thus conserves the redox energy in a proton gradient. In Ranunculus macranthus (Large buttercup), this protein is NAD(P)H-quinone oxidoreductase subunit J, chloroplastic.